A 191-amino-acid polypeptide reads, in one-letter code: Imidazoleglycerol-phosphate dehydratase (191 aa).

This sequence belongs to the imidazoleglycerol-phosphate dehydratase family.

It localises to the cytoplasm. It catalyses the reaction D-erythro-1-(imidazol-4-yl)glycerol 3-phosphate = 3-(imidazol-4-yl)-2-oxopropyl phosphate + H2O. The protein operates within amino-acid biosynthesis; L-histidine biosynthesis; L-histidine from 5-phospho-alpha-D-ribose 1-diphosphate: step 6/9. The chain is Imidazoleglycerol-phosphate dehydratase from Thermodesulfovibrio yellowstonii (strain ATCC 51303 / DSM 11347 / YP87).